We begin with the raw amino-acid sequence, 521 residues long: CDP-diacylglycerol--glycerol-3-phosphate 3-phosphatidyltransferase (521 aa).

A91–S98 contacts ATP. PLD phosphodiesterase domains lie at G177–Y203 and N419–A457. Residues H182, K184, and D189 contribute to the active site.

This sequence belongs to the CDP-alcohol phosphatidyltransferase class-II family.

It localises to the mitochondrion. The catalysed reaction is a CDP-1,2-diacyl-sn-glycerol + sn-glycerol 3-phosphate = a 1,2-diacyl-sn-glycero-3-phospho-(1'-sn-glycero-3'-phosphate) + CMP + H(+). It functions in the pathway phospholipid metabolism; phosphatidylglycerol biosynthesis; phosphatidylglycerol from CDP-diacylglycerol: step 1/2. Functionally, essential for the viability of mitochondrial petite mutant. Catalyzes the committed step to the synthesis of the acidic phospholipids. The polypeptide is CDP-diacylglycerol--glycerol-3-phosphate 3-phosphatidyltransferase (PGS1) (Saccharomyces pastorianus (Lager yeast)).